We begin with the raw amino-acid sequence, 125 residues long: Large ribosomal subunit protein eL8 (125 aa).

Belongs to the eukaryotic ribosomal protein eL8 family. In terms of assembly, part of the 50S ribosomal subunit. Probably part of the RNase P complex.

It localises to the cytoplasm. Functionally, multifunctional RNA-binding protein that recognizes the K-turn motif in ribosomal RNA, the RNA component of RNase P, box H/ACA, box C/D and box C'/D' sRNAs. The sequence is that of Large ribosomal subunit protein eL8 from Nanoarchaeum equitans (strain Kin4-M).